The following is a 131-amino-acid chain: Large ribosomal subunit protein bL19 (131 aa).

The protein belongs to the bacterial ribosomal protein bL19 family.

Its function is as follows. This protein is located at the 30S-50S ribosomal subunit interface and may play a role in the structure and function of the aminoacyl-tRNA binding site. The polypeptide is Large ribosomal subunit protein bL19 (Rhodopseudomonas palustris (strain BisB18)).